The primary structure comprises 402 residues: LIM/homeobox protein Lhx5 (402 aa).

LIM zinc-binding domains follow at residues 3 to 61 and 62 to 125; these read VHCA…RRFG and TKCA…SSSL. Over residues 124–135 the composition is skewed to low complexity; the sequence is SLKEGSLNSVSS. Disordered stretches follow at residues 124-186 and 298-402; these read SLKE…PRTT and HGPP…AAVW. A compositionally biased stretch (basic and acidic residues) spans 151–167; sequence DDPKETDNSTSSDKETA. Positions 180-239 form a DNA-binding region, homeobox; sequence RRGPRTTIKAKQLETLKAAFAATPKPTRHIREQLAQETGLNMRVIQVWFQNRRSKERRMK. 2 stretches are compositionally biased toward low complexity: residues 300 to 311 and 322 to 336; these read PPSQAQSPADSS and PLGALEPPLAGPHAA.

In terms of tissue distribution, expressed in fetal brain and in various regions of the adult central nervous system including the spinal cord, the thalamus, and the cerebellum.

Its subcellular location is the nucleus. Its function is as follows. Plays an essential role in the regulation of neuronal differentiation and migration during development of the central nervous system. In Homo sapiens (Human), this protein is LIM/homeobox protein Lhx5 (LHX5).